A 321-amino-acid polypeptide reads, in one-letter code: MITRLFENDKQLEGFFSSLDKKKKYLLALSGGSDSLFLMYLLKSRAIFFTAVHVDYGWRETSYQEASDLAALCEQEQIPFILDRPEATDPMDSRDIENAARRYRYELFYRLCKEKCFSGVFLGHHADDQAETILKRVFEGAHLGNLKGMSAQVMYRDVALLRPLLHIPKHKIVEALDSHQVQYVQDITNCNERFLRARMRERLFPYLQDVFGKNIRDPLLSLAGDSAELREYLDQQTAPFLLRVVDNERGKLLPIEQELLKTPFLAKWVCKQFFLNERLVASKSFLQTVYDHLMTGSTARLRLRNRTVLVKARGVIIESIY.

30–35 (SGGSDS) lines the ATP pocket.

The protein belongs to the tRNA(Ile)-lysidine synthase family.

The protein localises to the cytoplasm. It catalyses the reaction cytidine(34) in tRNA(Ile2) + L-lysine + ATP = lysidine(34) in tRNA(Ile2) + AMP + diphosphate + H(+). Its function is as follows. Ligates lysine onto the cytidine present at position 34 of the AUA codon-specific tRNA(Ile) that contains the anticodon CAU, in an ATP-dependent manner. Cytidine is converted to lysidine, thus changing the amino acid specificity of the tRNA from methionine to isoleucine. The protein is tRNA(Ile)-lysidine synthase of Chlamydia trachomatis serovar A (strain ATCC VR-571B / DSM 19440 / HAR-13).